A 197-amino-acid chain; its full sequence is Caspase recruitment domain-containing protein 16 (197 aa).

Residues 1–91 (MADKVLKEKR…YLAETLGLSA (91 aa)) enclose the CARD domain.

As to quaternary structure, homooligomer. Interacts with CASP1, CASP4, CARD8 and RIPK2. Widely expressed. Expressed at higher level in placenta, spleen, lymph node and bone marrow. Weakly or not expressed in thymus.

Functionally, caspase inhibitor. Acts as a regulator of procaspase-1/CASP1 activation implicated in the regulation of the proteolytic maturation of pro-interleukin-1 beta (IL1B) and its release during inflammation. Inhibits the release of IL1B in response to LPS in monocytes. Also induces NF-kappa-B activation during the pro-inflammatory cytokine response. Also able to inhibit CASP1-mediated neuronal cell death, TNF-alpha, hypoxia-, UV-, and staurosporine-mediated cell death but not ER stress-mediated cell death. Acts by preventing activation of caspases CASP1 and CASP4, possibly by preventing the interaction between CASP1 and RIPK2. The chain is Caspase recruitment domain-containing protein 16 (CARD16) from Homo sapiens (Human).